The following is a 543-amino-acid chain: Glucose transporter HT1 (543 aa).

Residues M1 to T24 form a disordered region. The Cytoplasmic segment spans residues M1–C38. The segment covering E7 to S19 has biased composition (polar residues). Residues I39–V59 form a helical membrane-spanning segment. Residues Y60 to G120 lie on the Extracellular side of the membrane. N-linked (GlcNAc...) asparagine glycans are attached at residues N90 and N91. Residues L121–L141 form a helical membrane-spanning segment. The Cytoplasmic portion of the chain corresponds to S142–K147. The chain crosses the membrane as a helical span at residues M148 to T168. At R169–T172 the chain is on the extracellular side. A helical membrane pass occupies residues L173–A193. The Cytoplasmic segment spans residues S194–V212. A helical transmembrane segment spans residues L213–V233. Residues K234–M248 lie on the Extracellular side of the membrane. The helical transmembrane segment at Q249–V269 threads the bilayer. The Cytoplasmic segment spans residues R270–G300. Residues P301–M321 traverse the membrane as a helical segment. Topologically, residues N322 to E337 are extracellular. A helical transmembrane segment spans residues G338–S358. Over R359 to Q364 the chain is Cytoplasmic. Residues L365–V385 form a helical membrane-spanning segment. Residues Y386–T400 lie on the Extracellular side of the membrane. Residues V401–L421 form a helical membrane-spanning segment. Topologically, residues A422–S436 are cytoplasmic. A helical membrane pass occupies residues F437–V457. Over E458–K470 the chain is Extracellular. The helical transmembrane segment at G471–L491 threads the bilayer. Topologically, residues R492–A543 are cytoplasmic. The span at T503–N519 shows a compositional bias: polar residues. The interval T503–A543 is disordered.

Belongs to the major facilitator superfamily. Sugar transporter (TC 2.A.1.1) family.

Its subcellular location is the membrane. In terms of biological role, facilitative glucose transporter. Binds D-fructose and cytochalasin-B, but not D-galactose. In Trypanosoma vivax (Duttonella vivax), this protein is Glucose transporter HT1 (HT1).